The following is a 66-amino-acid chain: Hemicalcin (66 aa).

Residues 1–21 (MRASLFIVIFVVSFITISCLS) form the signal peptide. Positions 22–33 (TDDEEARWIEKR) are excised as a propeptide. Intrachain disulfides connect Cys-36/Cys-50, Cys-43/Cys-54, and Cys-49/Cys-65. The essential for stimulation of [3H]ryanodine binding to RYR1 stretch occupies residues 55 to 57 (KRR).

Belongs to the scorpion calcin family. In terms of tissue distribution, expressed by the venom gland.

It is found in the secreted. Its function is as follows. This toxin stabilizes ryanodine receptor 1 (RyR1) opening in a long-lasting subconductance state (20% and 38% of the full conductance state have been found). It promotes an increase in the opening probability at intermediate concentration. Furthermore, it triggers calcium release from sarcoplasmic vesicles (68 nM are enough to induce a sharp release, and 45% of the total calcium is released after toxin (100 nM) addition) probably by acting as a cell-penetrating peptide (CPP). In addition, it has been shown to dose-dependently stimulate ryanodine binding to RyR1 (EC(50)=6.9-71 nM). It also augments the bell-shaped calcium-[3H]ryanodine binding curve that is maximal at about 10 uM calcium concentration. It binds a different site as ryanodine. It acts synergistically with caffeine. In vivo, intracerebroventricular injection into mice induces neurotoxic symptoms, followed by death. The polypeptide is Hemicalcin (Hemiscorpius lepturus (Scorpion)).